Reading from the N-terminus, the 77-residue chain is uncharacterized protein (77 aa).

An HTH cro/C1-type domain is found at 13 to 67 (VLQYMVNNDYSLNQLALEIGVSPATLSRVLNGERRPGQLVIGKMLHYFNLKFEDL). Residues 24 to 43 (LNQLALEIGVSPATLSRVLN) constitute a DNA-binding region (H-T-H motif).

The protein resides in the cytoplasm. This is an uncharacterized protein from Bacillus subtilis (strain 168).